The following is a 492-amino-acid chain: Solute carrier family 2, facilitated glucose transporter member 1 (492 aa).

N-acetylmethionine is present on M1. Residues 1–11 (MDPSSKKVTGR) lie on the Cytoplasmic side of the membrane. The chain crosses the membrane as a helical span at residues 12 to 33 (LMLAVGGAVLGSLQFGYNTGVI). Residues 34–66 (NAPQKVIEEFYNQTWNHRYGEPIPSTTLTTLWS) lie on the Extracellular side of the membrane. N-linked (GlcNAc...) asparagine glycosylation occurs at N45. Residues 67 to 87 (LSVAIFSVGGMIGSFSVGLFV) traverse the membrane as a helical segment. Topologically, residues 88–90 (NRF) are cytoplasmic. A helical membrane pass occupies residues 91–112 (GRRNSMLMMNLLAFVAAVLMGF). The Extracellular portion of the chain corresponds to 113-120 (SKLGKSFE). Residues 121–144 (MLILGRFIIGVYCGLTTGFVPMYV) traverse the membrane as a helical segment. At 145-155 (GEVSPTALRGA) the chain is on the cytoplasmic side. A helical membrane pass occupies residues 156–176 (LGTLHQLGIVVGILIAQVFGL). Q161 provides a ligand contact to D-glucose. Topologically, residues 177 to 185 (DSIMGNADL) are extracellular. Residues 186–206 (WPLLLSVIFIPALLQCILLPF) traverse the membrane as a helical segment. At 207 to 271 (CPESPRFLLI…LFRSPAYRQP (65 aa)) the chain is on the cytoplasmic side. S226 carries the phosphoserine modification. The chain crosses the membrane as a helical span at residues 272–293 (ILIAVVLQLSQQLSGINAVFYY). Residues 282–283 (QQ) and N288 contribute to the D-glucose site. The Extracellular portion of the chain corresponds to 294–306 (STSIFEKAGVQQP). The helical transmembrane segment at 307-328 (VYATIGSGIVNTAFTVVSLFVV) threads the bilayer. N317 serves as a coordination point for D-glucose. The Cytoplasmic portion of the chain corresponds to 329-334 (ERAGRR). The helical transmembrane segment at 335-355 (TLHLIGLAGMAGCAVLMTIAL) threads the bilayer. Over 356-365 (ALLERLPWMS) the chain is Extracellular. Residues 366 to 388 (YLSIVAIFGFVAFFEVGPGPIPW) traverse the membrane as a helical segment. E380 and W388 together coordinate D-glucose. The Cytoplasmic segment spans residues 389–401 (FIVAELFSQGPRP). The chain crosses the membrane as a helical span at residues 402–422 (AAIAVAGFSNWTSNFIVGMCF). The Extracellular portion of the chain corresponds to 423 to 429 (QYVEQLC). Residues 430-450 (GPYVFIIFTVLLVLFFIFTYF) traverse the membrane as a helical segment. At 451–492 (KVPETKGRTFDEIASGFRQGGASQSDKTPEELFHPLGADSQV) the chain is on the cytoplasmic side. S465 bears the Phosphoserine mark. The disordered stretch occupies residues 468-492 (RQGGASQSDKTPEELFHPLGADSQV). T478 bears the Phosphothreonine mark. Residue S490 is modified to Phosphoserine.

Belongs to the major facilitator superfamily. Sugar transporter (TC 2.A.1.1) family. Glucose transporter subfamily. In terms of assembly, found in a complex with ADD2, DMTN and SLC2A1. Interacts (via C-terminus cytoplasmic region) with DMTN isoform 2. Interacts with SNX27; the interaction is required when endocytosed to prevent degradation in lysosomes and promote recycling to the plasma membrane. Interacts with GIPC (via PDZ domain). Interacts with STOM. Interacts with SGTA (via Gln-rich region). Interacts with isoform 1 of BSG. Interacts with SMIM43; the interaction may promote SLC2A1-mediated glucose transport to meet the energy needs of mesendoderm differentiation. Phosphorylation at Ser-226 by PKC promotes glucose uptake by increasing cell membrane localization. In terms of tissue distribution, retina (at protein level).

The protein resides in the cell membrane. Its subcellular location is the photoreceptor inner segment. It catalyses the reaction D-glucose(out) = D-glucose(in). The uptake of glucose is inhibited by cytochalasin B. Glucose uptake is increased in response to phorbol ester 12-O-tetradecanoylphorbol-13-acetate (TPA) treatment: TPA-induced glucose uptake requires phosphorylation at Ser-226. In terms of biological role, facilitative glucose transporter, which is responsible for constitutive or basal glucose uptake. Has a very broad substrate specificity; can transport a wide range of aldoses including both pentoses and hexoses. Most important energy carrier of the brain: present at the blood-brain barrier and assures the energy-independent, facilitative transport of glucose into the brain. In association with BSG and NXNL1, promotes retinal cone survival by increasing glucose uptake into photoreceptors. Required for mesendoderm differentiation. The chain is Solute carrier family 2, facilitated glucose transporter member 1 from Mus musculus (Mouse).